A 210-amino-acid polypeptide reads, in one-letter code: Protein-L-isoaspartate O-methyltransferase (210 aa).

The active site involves Ser-52.

The protein belongs to the methyltransferase superfamily. L-isoaspartyl/D-aspartyl protein methyltransferase family.

It localises to the cytoplasm. It catalyses the reaction [protein]-L-isoaspartate + S-adenosyl-L-methionine = [protein]-L-isoaspartate alpha-methyl ester + S-adenosyl-L-homocysteine. Catalyzes the methyl esterification of L-isoaspartyl residues in peptides and proteins that result from spontaneous decomposition of normal L-aspartyl and L-asparaginyl residues. It plays a role in the repair and/or degradation of damaged proteins. This chain is Protein-L-isoaspartate O-methyltransferase, found in Protochlamydia amoebophila (strain UWE25).